We begin with the raw amino-acid sequence, 131 residues long: Sec-independent protein translocase protein TatB (131 aa).

A helical membrane pass occupies residues 1-21; that stretch reads MFDISFAELVVVGIVALIVIG. Composition is skewed to polar residues over residues 71–93 and 111–131; these read NSFENSVRSEINKIQETTETQSA and PVNTSETKTSSAPAEPRQPNS. The tract at residues 71-131 is disordered; it reads NSFENSVRSE…APAEPRQPNS (61 aa).

Belongs to the TatB family. The Tat system comprises two distinct complexes: a TatABC complex, containing multiple copies of TatA, TatB and TatC subunits, and a separate TatA complex, containing only TatA subunits. Substrates initially bind to the TatABC complex, which probably triggers association of the separate TatA complex to form the active translocon.

It is found in the cell inner membrane. Its function is as follows. Part of the twin-arginine translocation (Tat) system that transports large folded proteins containing a characteristic twin-arginine motif in their signal peptide across membranes. Together with TatC, TatB is part of a receptor directly interacting with Tat signal peptides. TatB may form an oligomeric binding site that transiently accommodates folded Tat precursor proteins before their translocation. This chain is Sec-independent protein translocase protein TatB, found in Nitrosomonas europaea (strain ATCC 19718 / CIP 103999 / KCTC 2705 / NBRC 14298).